The following is a 355-amino-acid chain: uncharacterized protein (355 aa).

The active-site For GATase activity is the Cys2. Positions 2–248 constitute a Glutamine amidotransferase type-2 domain; the sequence is CELLGICFNK…NGELMVFKNG (247 aa).

This is an uncharacterized protein from Methanocaldococcus jannaschii (strain ATCC 43067 / DSM 2661 / JAL-1 / JCM 10045 / NBRC 100440) (Methanococcus jannaschii).